We begin with the raw amino-acid sequence, 732 residues long: E3 ubiquitin-protein ligase TRIM56 (732 aa).

An RING-type zinc finger spans residues 21 to 60; the sequence is CKICLEQLRVPKTLPCLHTYCQDCLAQLAEGSRLRCPECR. The B box-type zinc-finger motif lies at 164 to 205; it reads RQAAQCPQHPGEALRFLCQPCSQLLCRECRLDPHLDHPCLPL. Positions 169, 172, 192, and 197 each coordinate Zn(2+). Residues 211–286 are a coiled coil; that stretch reads ARRPGLEELL…LRAHVEAAEE (76 aa). A compositionally biased stretch (basic and acidic residues) spans 374-384; it reads LPQKDSGKDGA. The segment at 374 to 462 is disordered; it reads LPQKDSGKDG…PAPGPNLEGS (89 aa). A compositionally biased stretch (polar residues) spans 389–405; that stretch reads GDATQPQSRDGVQTPNQ. T402 is subject to Phosphothreonine. The span at 407–416 shows a compositional bias: basic and acidic residues; sequence DGAKTPKESR. Residue T419 is modified to Phosphothreonine. The segment covering 434–446 has biased composition (basic residues); the sequence is SNKKRKFKGRLKS. A Phosphoserine modification is found at S452.

Belongs to the TRIM/RBCC family. In terms of assembly, interacts with STING1. Interacts with TICAM1.

Its subcellular location is the cytoplasm. The catalysed reaction is S-ubiquitinyl-[E2 ubiquitin-conjugating enzyme]-L-cysteine + [acceptor protein]-L-lysine = [E2 ubiquitin-conjugating enzyme]-L-cysteine + N(6)-ubiquitinyl-[acceptor protein]-L-lysine.. It participates in protein modification; protein ubiquitination. Its function is as follows. E3 ubiquitin-protein ligase that plays a key role in innate antiviral immunity by mediating ubiquitination of CGAS and STING1. In response to pathogen- and host-derived double-stranded DNA (dsDNA), targets STING1 to 'Lys-63'-linked ubiquitination, thereby promoting its homodimerization, a step required for the production of type I interferon IFN-beta. Also mediate monoubiquitination of CGAS, thereby promoting CGAS oligomerization and subsequent activation. Independently of its E3 ubiquitin ligase activity, positive regulator of TLR3 signaling. Potentiates extracellular double stranded RNA (dsRNA)-induced expression of IFNB1 and interferon-stimulated genes ISG15, IFIT1/ISG56, CXCL10, OASL and CCL5/RANTES. Restricts bovine viral diarrhea virus (BVDV) replication. The polypeptide is E3 ubiquitin-protein ligase TRIM56 (Bos taurus (Bovine)).